The following is a 247-amino-acid chain: Aliphatic sulfonates import ATP-binding protein SsuB 3 (247 aa).

In terms of domain architecture, ABC transporter spans Val13–Leu227. Gly45 to Ser52 serves as a coordination point for ATP.

This sequence belongs to the ABC transporter superfamily. Aliphatic sulfonates importer (TC 3.A.1.17.2) family. The complex is composed of two ATP-binding proteins (SsuB), two transmembrane proteins (SsuC) and a solute-binding protein (SsuA).

The protein localises to the cell membrane. It carries out the reaction ATP + H2O + aliphatic sulfonate-[sulfonate-binding protein]Side 1 = ADP + phosphate + aliphatic sulfonateSide 2 + [sulfonate-binding protein]Side 1.. In terms of biological role, part of the ABC transporter complex SsuABC involved in aliphatic sulfonates import. Responsible for energy coupling to the transport system. In Nocardia farcinica (strain IFM 10152), this protein is Aliphatic sulfonates import ATP-binding protein SsuB 3.